Here is a 366-residue protein sequence, read N- to C-terminus: Mitochondrial substrate carrier family protein H (366 aa).

Residues 1–25 are compositionally biased toward low complexity; sequence MLSNSVNNNNNNNNINNSNSNNNDS. The interval 1–26 is disordered; it reads MLSNSVNNNNNNNNINNSNSNNNDSN. Solcar repeat units follow at residues 29-121, 132-243, and 259-360; these read KNVK…LKEY, NIYT…LKNK, and SPFF…IKQS. 6 helical membrane passes run 35–55, 96–112, 133–151, 175–192, 262–282, and 340–357; these read MVAS…LDVV, GVTP…TIYF, IYTV…SASV, VAMA…IPLS, FINF…TTPI, and VAKV…FEYI.

The protein belongs to the mitochondrial carrier (TC 2.A.29) family.

The protein localises to the mitochondrion inner membrane. Functionally, mitochondrial transporter required for glutathione import into mitochondria. This chain is Mitochondrial substrate carrier family protein H, found in Dictyostelium discoideum (Social amoeba).